Reading from the N-terminus, the 827-residue chain is Cadherin-17 (827 aa).

The N-terminal stretch at M1–G21 is a signal peptide. Residues Q22–M786 lie on the Extracellular side of the membrane. 7 consecutive Cadherin domains span residues P29–Q127, T128–P243, V244–C339, L340–F448, E449–F565, P566–L666, and A667–G776. 7 N-linked (GlcNAc...) asparagine glycosylation sites follow: N148, N183, N249, N418, N545, N573, and N721. A helical membrane pass occupies residues A787–I807. The Cytoplasmic segment spans residues R808–S827.

As to expression, liver and intestine.

The protein localises to the cell membrane. In terms of biological role, cadherins are calcium-dependent cell adhesion proteins. They preferentially interact with themselves in a homophilic manner in connecting cells; cadherins may thus contribute to the sorting of heterogeneous cell types. LI-cadherin may have a role in the morphological organization of liver and intestine. The protein is Cadherin-17 (Cdh17) of Rattus norvegicus (Rat).